A 173-amino-acid polypeptide reads, in one-letter code: Thaumatin-like protein PWIR2 (173 aa).

Positions 1–20 (MATSPVLFLLLAVFAAGASA) are cleaved as a signal peptide.

The protein belongs to the thaumatin family.

This chain is Thaumatin-like protein PWIR2, found in Triticum aestivum (Wheat).